The chain runs to 248 residues: PF03932 family protein CutC (248 aa).

It belongs to the CutC family. In terms of assembly, homodimer.

Its subcellular location is the cytoplasm. In Escherichia coli O139:H28 (strain E24377A / ETEC), this protein is PF03932 family protein CutC.